The following is a 72-amino-acid chain: Guanine nucleotide-binding protein subunit gamma (72 aa).

The disordered stretch occupies residues 32 to 72 (MVSVAPPKANPSVSSKTKQQQHFKPGKATKDKATTKCCTIS). C68 carries the S-palmitoyl cysteine lipid modification. Residue C69 is modified to Cysteine methyl ester. The S-farnesyl cysteine moiety is linked to residue C69. A propeptide spans 70 to 72 (TIS) (removed in mature form).

The protein belongs to the G protein gamma family. In terms of assembly, g proteins are composed of 3 units, alpha, beta and gamma. Binding of the beta-gamma subunit complex (git5-git11) to the alpha subunit (gpa2) facilitates interaction with GPCR git3.

It localises to the cell membrane. Its function is as follows. Gamma subunit of the heterotrimeric guanine nucleotide-binding protein (G protein) involved in glucose-induced cAMP signaling. The beta-gamma subunits (git5-git11) promote binding of the alpha subunit gpa2 to GPCR git3, which senses extracellular glucose, to activate cAMP-PKA signaling and repress sexual development and gluconeogenesis. The protein is Guanine nucleotide-binding protein subunit gamma (git11) of Schizosaccharomyces pombe (strain 972 / ATCC 24843) (Fission yeast).